The primary structure comprises 158 residues: Putative zinc-binding protein ORF9 (158 aa).

The segment at 72–111 adopts an RING-type; degenerate zinc-finger fold; it reads CPVCGRAVVGPTVREACGHVTCNACETEACAVDRLCIGGG. The interval 126–158 is disordered; it reads GPRWRGPRPTRPEAHEAVQRSRGSSEDACTCAP. Basic and acidic residues predominate over residues 135 to 150; sequence TRPEAHEAVQRSRGSS.

This is Putative zinc-binding protein ORF9 (ORF9) from Ictalurid herpesvirus 1 (strain Auburn) (IcHV-1).